Consider the following 144-residue polypeptide: Large ribosomal subunit protein uL16 (144 aa).

The protein belongs to the universal ribosomal protein uL16 family. In terms of assembly, part of the 50S ribosomal subunit.

Its function is as follows. Binds 23S rRNA and is also seen to make contacts with the A and possibly P site tRNAs. This is Large ribosomal subunit protein uL16 from Enterococcus faecalis (strain ATCC 700802 / V583).